The chain runs to 509 residues: Maturase K (509 aa).

Belongs to the intron maturase 2 family. MatK subfamily.

Its subcellular location is the plastid. Usually encoded in the trnK tRNA gene intron. Probably assists in splicing its own and other chloroplast group II introns. The polypeptide is Maturase K (Cuscuta reflexa (Southern Asian dodder)).